Here is a 492-residue protein sequence, read N- to C-terminus: Nuclear autoantigenic sperm protein homolog (492 aa).

Over residues M1–A14 the composition is skewed to low complexity. 2 disordered regions span residues M1–R52 and D123–V254. A phosphothreonine mark is found at T32 and T33. Positions V124–E145 are enriched in acidic residues. Basic and acidic residues-rich tracts occupy residues G147–E159 and K170–S179. S179 and S184 each carry phosphoserine. T185 carries the post-translational modification Phosphothreonine. Residue S193 is modified to Phosphoserine. Residues S226–N238 show a composition bias toward polar residues. Positions V244 to G253 are enriched in acidic residues. 2 TPR repeats span residues A284 to L317 and A326 to E359. The stretch at M377–Q400 forms a coiled coil. A compositionally biased stretch (low complexity) spans S418–A459. Positions S418–V492 are disordered. Residues S478 and S485 each carry the phosphoserine modification.

This sequence belongs to the NASP family. In terms of assembly, interacts with the histone H3-H4 heterodimer; the interaction with H4 is probably indirect and mediated by H3 (His3, His3.3A and His3.3B). Interacts with His2Av; this interaction directly or indirectly destabilizes His2Av.

Its subcellular location is the cytoplasm. The protein resides in the nucleus. It localises to the perinuclear region. Functionally, component of the histone chaperone network. Binds and stabilizes histone H3-H4 not bound to chromatin to maintain a soluble reservoir and modulate degradation by chaperone-mediated autophagy. May also bind and stabilize monomeric H3. Maternal effect gene essential for early embryogenesis. The chain is Nuclear autoantigenic sperm protein homolog from Drosophila melanogaster (Fruit fly).